Consider the following 762-residue polypeptide: 5-methyltetrahydropteroyltriglutamate--homocysteine methyltransferase (762 aa).

Residues 17–20 (REWK) and lysine 111 contribute to the 5-methyltetrahydropteroyltri-L-glutamate site. Residues 435–437 (IGS) and glutamate 488 contribute to the L-homocysteine site. L-methionine-binding positions include 435-437 (IGS) and glutamate 488. Residues 519–520 (RC) and tryptophan 565 contribute to the 5-methyltetrahydropteroyltri-L-glutamate site. Position 603 (aspartate 603) interacts with L-homocysteine. Residue aspartate 603 coordinates L-methionine. Position 609 (glutamate 609) interacts with 5-methyltetrahydropteroyltri-L-glutamate. Histidine 645, cysteine 647, and glutamate 669 together coordinate Zn(2+). Histidine 698 functions as the Proton donor in the catalytic mechanism. Cysteine 730 lines the Zn(2+) pocket.

The protein belongs to the vitamin-B12 independent methionine synthase family. The cofactor is Zn(2+).

The enzyme catalyses 5-methyltetrahydropteroyltri-L-glutamate + L-homocysteine = tetrahydropteroyltri-L-glutamate + L-methionine. It participates in amino-acid biosynthesis; L-methionine biosynthesis via de novo pathway; L-methionine from L-homocysteine (MetE route): step 1/1. In terms of biological role, catalyzes the transfer of a methyl group from 5-methyltetrahydrofolate to homocysteine resulting in methionine formation. This chain is 5-methyltetrahydropteroyltriglutamate--homocysteine methyltransferase, found in Bacillus thuringiensis (strain Al Hakam).